The sequence spans 333 residues: Probable malate dehydrogenase 3 (333 aa).

An NAD(+)-binding site is contributed by 12–18 (GAAGQIA). R93 and R99 together coordinate substrate. NAD(+) is bound by residues N106, Q113, and 130–132 (VGN). Substrate contacts are provided by N132 and R163. H188 serves as the catalytic Proton acceptor.

Belongs to the LDH/MDH superfamily. MDH type 2 family. As to quaternary structure, homodimer.

The catalysed reaction is (S)-malate + NAD(+) = oxaloacetate + NADH + H(+). In terms of biological role, catalyzes the reversible oxidation of malate to oxaloacetate. The protein is Probable malate dehydrogenase 3 (mdhC) of Dictyostelium discoideum (Social amoeba).